The sequence spans 173 residues: Lens fiber membrane intrinsic protein (173 aa).

At 1 to 3 (MYS) the chain is on the cytoplasmic side. Residues 4–24 (FMGGGLFCAWVGTILLVVATA) form a helical membrane-spanning segment. Topologically, residues 25 to 66 (TDHWMQYRLSGSFAHQGLWRYCLGNKCFLQTESIAYWNATRA) are extracellular. 2 C-linked (Man) tryptophan glycosylation sites follow: tryptophan 43 and tryptophan 61. Residue asparagine 62 is glycosylated (N-linked (GlcNAc...) asparagine). Residues 67 to 87 (FMILSALCATSGIIMGVLAFA) traverse the membrane as a helical segment. Residues 88 to 98 (QQSTFTRLSRP) lie on the Cytoplasmic side of the membrane. A helical membrane pass occupies residues 99–119 (FSAGIMFFASTLFVLLALAIY). Residues 120–140 (TGVTVSFLGRRFGDWRFSWSY) are Extracellular-facing. A helical membrane pass occupies residues 141 to 161 (ILGWVALLMTFFAGIFYMCAY). Over 162–173 (RMHECRRLSTPR) the chain is Cytoplasmic. Serine 170 is subject to Phosphoserine. Residue threonine 171 is modified to Phosphothreonine.

This sequence belongs to the PMP-22/EMP/MP20 family. As to quaternary structure, seems to be associated with itself or another lens membrane component via disulfide bonds. Eye lens specific.

The protein localises to the membrane. Functionally, present in the thicker 16-17 nm junctions of mammalian lens fiber cells, where it may contribute to cell junctional organization. Acts as a receptor for calmodulin. May play an important role in both lens development and cataractogenesis. In Rattus norvegicus (Rat), this protein is Lens fiber membrane intrinsic protein (Lim2).